We begin with the raw amino-acid sequence, 153 residues long: Interleukin-4 (153 aa).

A signal peptide spans 1-24; the sequence is MGLTSQLLPPLFFLLACAGNFAHG. Disulfide bonds link Cys-27/Cys-151, Cys-48/Cys-89, and Cys-70/Cys-123. The N-linked (GlcNAc...) asparagine glycan is linked to Asn-62.

This sequence belongs to the IL-4/IL-13 family.

The protein resides in the secreted. In terms of biological role, participates in at least several B-cell activation processes as well as of other cell types. It is a costimulator of DNA-synthesis. It induces the expression of class II MHC molecules on resting B-cells. It enhances both secretion and cell surface expression of IgE and IgG1. It also regulates the expression of the low affinity Fc receptor for IgE (CD23) on both lymphocytes and monocytes. Positively regulates IL31RA expression in macrophages. Stimulates autophagy in dendritic cells by interfering with mTORC1 signaling and through the induction of RUFY4. The polypeptide is Interleukin-4 (IL4) (Cercocebus atys (Sooty mangabey)).